Here is a 270-residue protein sequence, read N- to C-terminus: UBX domain-containing protein 8 (270 aa).

Met-1 is a topological domain (cytoplasmic). The helical transmembrane segment at 2-22 threads the bilayer; sequence ASRGVVGIFFLSAVPLVCLEL. Residues 23-33 lie on the Lumenal side of the membrane; the sequence is RRGIPDIGIKD. The helical transmembrane segment at 34–54 threads the bilayer; it reads FLLLCGRILLLLALLTLIISV. Residues 55-270 lie on the Cytoplasmic side of the membrane; sequence TTSWLNSFKS…LILEEKEQTN (216 aa). Positions 130–171 are disordered; that stretch reads SGHKLGGDEGTSQTSFETSNREAAKSQNLPKPLTEFPSPAEQ. The residue at position 167 (Ser-167) is a Phosphoserine. Positions 187–263 constitute a UBX domain; that stretch reads TAEEVVTVAL…GITVDTVLIL (77 aa).

Interacts with SYVN1 and VCP. In terms of tissue distribution, expressed abundantly in ovary and testis, and weakly in all other tissues tested.

Its subcellular location is the endoplasmic reticulum membrane. Involved in endoplasmic reticulum-associated degradation (ERAD) for misfolded lumenal proteins, possibly by tethering VCP to the endoplasmic reticulum membrane. May play a role in reproduction. This is UBX domain-containing protein 8 (UBXN8) from Homo sapiens (Human).